A 632-amino-acid chain; its full sequence is Extracellular metalloproteinase 2 (632 aa).

The first 19 residues, 1–19, serve as a signal peptide directing secretion; it reads MHGLLLAGLAAALPLGVAG. Positions 20-244 are excised as a propeptide; sequence LPARQQSGLS…VHNVVDYVAS (225 aa). Residue asparagine 270 is glycosylated (N-linked (GlcNAc...) asparagine). Residue histidine 429 coordinates Zn(2+). Residue glutamate 430 is part of the active site. Residue histidine 433 participates in Zn(2+) binding.

The protein belongs to the peptidase M36 family. Zn(2+) serves as cofactor.

The protein resides in the secreted. Its function is as follows. Secreted metalloproteinase probably acting as a virulence factor. The protein is Extracellular metalloproteinase 2 (MEP2) of Arthroderma benhamiae (Trichophyton mentagrophytes).